The sequence spans 270 residues: Putative phosphoenolpyruvate synthase regulatory protein (270 aa).

150 to 157 (GVSRCGKT) contributes to the ADP binding site.

The protein belongs to the pyruvate, phosphate/water dikinase regulatory protein family. PSRP subfamily.

It carries out the reaction [pyruvate, water dikinase] + ADP = [pyruvate, water dikinase]-phosphate + AMP + H(+). It catalyses the reaction [pyruvate, water dikinase]-phosphate + phosphate + H(+) = [pyruvate, water dikinase] + diphosphate. Bifunctional serine/threonine kinase and phosphorylase involved in the regulation of the phosphoenolpyruvate synthase (PEPS) by catalyzing its phosphorylation/dephosphorylation. This is Putative phosphoenolpyruvate synthase regulatory protein from Shewanella oneidensis (strain ATCC 700550 / JCM 31522 / CIP 106686 / LMG 19005 / NCIMB 14063 / MR-1).